The primary structure comprises 873 residues: Inner centromere protein A (873 aa).

Disordered regions lie at residues 50-124 (AEPE…KRMT), 237-270 (PANE…VVRK), 282-452 (FSLA…PPPH), 484-535 (KRNT…KVRR), 566-649 (QIDE…LAEQ), 683-736 (LERA…EQAA), and 781-800 (DLNS…PIPA). Positions 60–69 (SQKRRRKKRT) are enriched in basic residues. The segment covering 87–105 (RQSNASWSSSVRRLSVRNQ) has biased composition (low complexity). Positions 239–254 (NEQQLNLSNQSATPTG) are enriched in polar residues. Residues 261-270 (SVRRSLVVRK) show a composition bias toward basic residues. Residues 286-297 (SKRESMTREAVR) are compositionally biased toward basic and acidic residues. Positions 314 to 325 (SSTSSQRSYQSS) are enriched in low complexity. The span at 437–452 (PSPPCPPSKIVRPPPH) shows a compositional bias: pro residues. Basic and acidic residues-rich tracts occupy residues 491–535 (TDPK…KVRR), 566–584 (QIDE…EEKA), 591–649 (KKQE…LAEQ), and 683–733 (LERA…KAKE). The SAH stretch occupies residues 494–707 (KTEEKERQRL…EERKKREQQE (214 aa)). Residues 782–856 (LNSDDSTDDE…RTSSAVWHSP (75 aa)) form an IN box region. A phosphoserine mark is found at S849 and S850.

This sequence belongs to the INCENP family. Component of the CPC composed of survivin/birc5, incenp, cdca8/borealin and/or cdca9/dasra-A, and aurkb/aurora-B. Interacts (via C-terminus) with aurkb (via N-terminus and kinase domain). Interacts (via N-terminus) with birc5.1, birc5.2, cdca8 and cdca9. Interacts with mtus1.

Its subcellular location is the nucleus. It is found in the chromosome. The protein resides in the centromere. It localises to the cytoplasm. The protein localises to the cytoskeleton. Its subcellular location is the spindle. It is found in the midbody. The protein resides in the kinetochore. In terms of biological role, component of the chromosomal passenger complex (CPC), a complex that acts as a key regulator of mitosis. The CPC complex has essential functions at the centromere in ensuring correct chromosome alignment and segregation and is required for chromatin-induced microtubule stabilization and spindle assembly. Acts as a scaffold regulating CPC localization and activity. The C-terminus associates with aurkb/aurora-B, the N-terminus associated with cdca8/borealin and/or cdca9/dasra-A tethers the CPC to the inner centromere, and the microtubule binding activity within the central SAH domain directs aurkb/aurora-B toward substrates near microtubules. Activates aurkb. The sequence is that of Inner centromere protein A (incenp-a) from Xenopus laevis (African clawed frog).